We begin with the raw amino-acid sequence, 439 residues long: Ribosomal protein uS12 methylthiotransferase RimO (439 aa).

The 113-residue stretch at 7-119 (KQLCLISLGC…IDIMIAKKQN (113 aa)) folds into the MTTase N-terminal domain. C16, C50, C82, C151, C155, and C158 together coordinate [4Fe-4S] cluster. The 232-residue stretch at 137–368 (TGSSVHAYVK…ALKHQNHSFK (232 aa)) folds into the Radical SAM core domain.

This sequence belongs to the methylthiotransferase family. RimO subfamily. [4Fe-4S] cluster is required as a cofactor.

It localises to the cytoplasm. The enzyme catalyses L-aspartate(89)-[ribosomal protein uS12]-hydrogen + (sulfur carrier)-SH + AH2 + 2 S-adenosyl-L-methionine = 3-methylsulfanyl-L-aspartate(89)-[ribosomal protein uS12]-hydrogen + (sulfur carrier)-H + 5'-deoxyadenosine + L-methionine + A + S-adenosyl-L-homocysteine + 2 H(+). Catalyzes the methylthiolation of an aspartic acid residue of ribosomal protein uS12. In Helicobacter pylori (strain G27), this protein is Ribosomal protein uS12 methylthiotransferase RimO.